We begin with the raw amino-acid sequence, 632 residues long: Golgin subfamily A member 8N (632 aa).

Residues 1-76 form a disordered region; the sequence is MAEETQHNKL…TSSATLKDLE (76 aa). Residues 38-50 show a composition bias toward polar residues; it reads TNGSIPETATSGG. Coiled-coil stretches lie at residues 85-150 and 209-421; these read VLDS…TDLY and ELEQ…SLMA. Disordered stretches follow at residues 423-445, 505-524, and 552-573; these read PGEG…PMPS, DAAL…DEGE, and NSAD…ADKH. The segment covering 508–520 has biased composition (gly residues); the sequence is LGGGHHQAGAQGG.

It belongs to the GOLGA8 family.

In Homo sapiens (Human), this protein is Golgin subfamily A member 8N.